We begin with the raw amino-acid sequence, 652 residues long: 1,4-alpha-glucan branching enzyme GlgB (652 aa).

Asp322 (nucleophile) is an active-site residue. The active-site Proton donor is the Glu373.

It belongs to the glycosyl hydrolase 13 family. GlgB subfamily. Monomer.

The catalysed reaction is Transfers a segment of a (1-&gt;4)-alpha-D-glucan chain to a primary hydroxy group in a similar glucan chain.. The protein operates within glycan biosynthesis; glycogen biosynthesis. In terms of biological role, catalyzes the formation of the alpha-1,6-glucosidic linkages in glycogen by scission of a 1,4-alpha-linked oligosaccharide from growing alpha-1,4-glucan chains and the subsequent attachment of the oligosaccharide to the alpha-1,6 position. The sequence is that of 1,4-alpha-glucan branching enzyme GlgB from Deinococcus geothermalis (strain DSM 11300 / CIP 105573 / AG-3a).